A 147-amino-acid polypeptide reads, in one-letter code: Myoglobin (147 aa).

The Globin domain occupies 2–141 (ADFDAVLKCW…IIADLEANYK (140 aa)). H60 provides a ligand contact to nitrite. An O2-binding site is contributed by H60. Position 89 (H89) interacts with heme b.

The protein belongs to the globin family. As to quaternary structure, monomeric.

The protein localises to the cytoplasm. It localises to the sarcoplasm. The catalysed reaction is Fe(III)-heme b-[protein] + nitric oxide + H2O = Fe(II)-heme b-[protein] + nitrite + 2 H(+). It carries out the reaction H2O2 + AH2 = A + 2 H2O. Functionally, monomeric heme protein which primary function is to store oxygen and facilitate its diffusion within muscle tissues. Reversibly binds oxygen through a pentacoordinated heme iron and enables its timely and efficient release as needed during periods of heightened demand. Depending on the oxidative conditions of tissues and cells, and in addition to its ability to bind oxygen, it also has a nitrite reductase activity whereby it regulates the production of bioactive nitric oxide. Under stress conditions, like hypoxia and anoxia, it also protects cells against reactive oxygen species thanks to its pseudoperoxidase activity. This is Myoglobin (mb) from Thunnus obesus (Bigeye tuna).